The following is a 66-amino-acid chain: Neurotoxin BmK AGP-SYPU1 (66 aa).

The region spanning 2–64 (RDAYIAQNYN…KPIRIPGKCH (63 aa)) is the LCN-type CS-alpha/beta domain. Intrachain disulfides connect Cys-12-Cys-63, Cys-16-Cys-36, Cys-22-Cys-46, and Cys-26-Cys-48. Residues 65–66 (RR) constitute a propeptide, removed by a carboxypeptidase.

In terms of tissue distribution, expressed by the venom gland.

Its subcellular location is the secreted. Its function is as follows. Alpha toxins bind voltage-independently at site-3 of sodium channels (Nav) and inhibit the inactivation of the activated channels, thereby blocking neuronal transmission. This toxin has a strong analgesic effect when administered to mice by intraperitoneal injection. The chain is Neurotoxin BmK AGP-SYPU1 from Olivierus martensii (Manchurian scorpion).